The sequence spans 344 residues: Cyanuric acid amidohydrolase (344 aa).

The RU A stretch occupies residues 1–91 (MTVVDIVKRT…ASAFVGTDRP (91 aa)). Substrate is bound by residues Arg51 and 71–72 (SG). The tract at residues 97–232 (ALVAAVGRTA…CHILVLGNSP (136 aa)) is RU B. Lys146 is an active-site residue. Substrate is bound by residues Arg178 and 215 to 216 (SS). The active-site Nucleophile is Ser215. Positions 238–344 (LRAVHGVMRD…PVTVVYRVAS (107 aa)) are RU C. A Mg(2+)-binding site is contributed by Glu276. Substrate-binding positions include Arg303 and 322–323 (SG). Residues Ala325, Gln328, Gly329, Pro330, and Gly333 each coordinate Mg(2+).

It belongs to the cyclic amide hydrolase (CyAH) family. Homotetramer.

The catalysed reaction is cyanurate + H2O = 1-carboxybiuret + H(+). Its pathway is xenobiotic degradation; atrazine degradation; biuret from cyanurate: step 1/1. Its activity is regulated as follows. Inhibited by barbituric acid. In terms of biological role, responsible for the hydrolysis of cyanuric acid, an intermediate formed during catabolism of s-triazine based compounds in herbicides such as atrazine and polymers such as melamine. Catalyzes the hydrolytic opening of the s-triazine ring of cyanuric acid (2,4,6-trihydroxy-s-triazine) to yield carbon dioxide and carboxybiuret, which spontaneously decarboxylates to biuret. The chain is Cyanuric acid amidohydrolase from Pseudonocardia dioxanivorans (strain ATCC 55486 / DSM 44775 / JCM 13855 / CB1190).